Reading from the N-terminus, the 33-residue chain is Dermonecrotic toxin LiSicTox-alphaI-1 (33 aa).

Glu32 contacts Mg(2+).

Belongs to the arthropod phospholipase D family. Class II subfamily. Requires Mg(2+) as cofactor. Post-translationally, contains 2 disulfide bonds. As to expression, expressed by the venom gland.

The protein resides in the secreted. The enzyme catalyses an N-(acyl)-sphingosylphosphocholine = an N-(acyl)-sphingosyl-1,3-cyclic phosphate + choline. It catalyses the reaction an N-(acyl)-sphingosylphosphoethanolamine = an N-(acyl)-sphingosyl-1,3-cyclic phosphate + ethanolamine. The catalysed reaction is a 1-acyl-sn-glycero-3-phosphocholine = a 1-acyl-sn-glycero-2,3-cyclic phosphate + choline. It carries out the reaction a 1-acyl-sn-glycero-3-phosphoethanolamine = a 1-acyl-sn-glycero-2,3-cyclic phosphate + ethanolamine. In terms of biological role, dermonecrotic toxins cleave the phosphodiester linkage between the phosphate and headgroup of certain phospholipids (sphingolipid and lysolipid substrates), forming an alcohol (often choline) and a cyclic phosphate. This toxin acts on sphingomyelin (SM). It may also act on ceramide phosphoethanolamine (CPE), lysophosphatidylcholine (LPC) and lysophosphatidylethanolamine (LPE), but not on lysophosphatidylserine (LPS), and lysophosphatidylglycerol (LPG). It acts by transphosphatidylation, releasing exclusively cyclic phosphate products as second products. In vivo, intradermal injection induces dermonecrosis. Induces hemolysis, increased vascular permeability, edema, inflammatory response, and platelet aggregation. This is Dermonecrotic toxin LiSicTox-alphaI-1 from Loxosceles intermedia (Brown spider).